We begin with the raw amino-acid sequence, 577 residues long: Urease subunit alpha (577 aa).

The Urease domain occupies 136-577; sequence GTVDCHVHLI…LPMTQRYFLF (442 aa). 3 residues coordinate Ni(2+): histidine 141, histidine 143, and lysine 224. An N6-carboxylysine modification is found at lysine 224. Histidine 226 contributes to the substrate binding site. Ni(2+) contacts are provided by histidine 253 and histidine 279. Catalysis depends on histidine 327, which acts as the Proton donor. Aspartate 367 lines the Ni(2+) pocket.

It belongs to the metallo-dependent hydrolases superfamily. Urease alpha subunit family. Heterotrimer of UreA (gamma), UreB (beta) and UreC (alpha) subunits. Three heterotrimers associate to form the active enzyme. The cofactor is Ni cation. Post-translationally, carboxylation allows a single lysine to coordinate two nickel ions.

Its subcellular location is the cytoplasm. It catalyses the reaction urea + 2 H2O + H(+) = hydrogencarbonate + 2 NH4(+). It participates in nitrogen metabolism; urea degradation; CO(2) and NH(3) from urea (urease route): step 1/1. The protein is Urease subunit alpha of Mycobacterium bovis (strain ATCC BAA-935 / AF2122/97).